The primary structure comprises 78 residues: Exodeoxyribonuclease 7 small subunit (78 aa).

Belongs to the XseB family. In terms of assembly, heterooligomer composed of large and small subunits.

The protein localises to the cytoplasm. The catalysed reaction is Exonucleolytic cleavage in either 5'- to 3'- or 3'- to 5'-direction to yield nucleoside 5'-phosphates.. Bidirectionally degrades single-stranded DNA into large acid-insoluble oligonucleotides, which are then degraded further into small acid-soluble oligonucleotides. The protein is Exodeoxyribonuclease 7 small subunit of Desulfitobacterium hafniense (strain Y51).